The sequence spans 145 residues: D-aminoacyl-tRNA deacylase (145 aa).

Positions 137–138 (GP) match the Gly-cisPro motif, important for rejection of L-amino acids motif.

The protein belongs to the DTD family. As to quaternary structure, homodimer.

It localises to the cytoplasm. It catalyses the reaction glycyl-tRNA(Ala) + H2O = tRNA(Ala) + glycine + H(+). It carries out the reaction a D-aminoacyl-tRNA + H2O = a tRNA + a D-alpha-amino acid + H(+). An aminoacyl-tRNA editing enzyme that deacylates mischarged D-aminoacyl-tRNAs. Also deacylates mischarged glycyl-tRNA(Ala), protecting cells against glycine mischarging by AlaRS. Acts via tRNA-based rather than protein-based catalysis; rejects L-amino acids rather than detecting D-amino acids in the active site. By recycling D-aminoacyl-tRNA to D-amino acids and free tRNA molecules, this enzyme counteracts the toxicity associated with the formation of D-aminoacyl-tRNA entities in vivo and helps enforce protein L-homochirality. The polypeptide is D-aminoacyl-tRNA deacylase (Yersinia pestis bv. Antiqua (strain Antiqua)).